We begin with the raw amino-acid sequence, 492 residues long: Probable cytosol aminopeptidase (492 aa).

Mn(2+) is bound by residues Lys-259 and Asp-264. Lys-271 is a catalytic residue. Mn(2+)-binding residues include Asp-283, Asp-342, and Glu-344. Residue Arg-346 is part of the active site.

It belongs to the peptidase M17 family. It depends on Mn(2+) as a cofactor.

The protein resides in the cytoplasm. The catalysed reaction is Release of an N-terminal amino acid, Xaa-|-Yaa-, in which Xaa is preferably Leu, but may be other amino acids including Pro although not Arg or Lys, and Yaa may be Pro. Amino acid amides and methyl esters are also readily hydrolyzed, but rates on arylamides are exceedingly low.. It carries out the reaction Release of an N-terminal amino acid, preferentially leucine, but not glutamic or aspartic acids.. Its function is as follows. Presumably involved in the processing and regular turnover of intracellular proteins. Catalyzes the removal of unsubstituted N-terminal amino acids from various peptides. This is Probable cytosol aminopeptidase (pepA) from Synechocystis sp. (strain ATCC 27184 / PCC 6803 / Kazusa).